The primary structure comprises 527 residues: Serine/threonine-protein kinase NLK (527 aa).

Sufficient for interaction with DAPK3 regions lie at residues 1–125 (MSLC…KAHH) and 124–416 (HHHQ…SKRI). 2 required for interaction with TAB2 regions span residues 1 to 304 (MSLC…VVTQ) and 434 to 527 (YHTC…LVWE). Disordered regions lie at residues 22–72 (AAAA…SSAA) and 90–140 (QQPY…DIEP). The span at 26–54 (GHHHHHHHHLPHLPPPHLHHHHHPQHHLH) shows a compositional bias: basic residues. The segment covering 103 to 119 (PGPAAAAPAQVQAAAAA) has biased composition (low complexity). Basic residues predominate over residues 122–131 (KAHHHQHSHH). The region spanning 138 to 427 (IEPDRPIGYG…AKDALAHPYL (290 aa)) is the Protein kinase domain. ATP-binding positions include 144-152 (IGYGAFGVV) and lysine 167. Aspartate 264 serves as the catalytic Proton acceptor. Phosphothreonine; by autocatalysis is present on threonine 298. A TQE motif is present at residues 298–300 (TQE). The required for homodimerization and kinase activation and localization to the nucleus stretch occupies residues 428 to 527 (DEGRLRYHTC…EMPPSPLVWE (100 aa)). Position 522 is a phosphoserine (serine 522).

It belongs to the protein kinase superfamily. CMGC Ser/Thr protein kinase family. MAP kinase subfamily. In terms of assembly, homodimer. Homodimerization is required for intermolecular autophosphorylation, kinase activation and nuclear localization. May interact with components of cullin-RING-based SCF (SKP1-CUL1-F-box protein) E3 ubiquitin-protein ligase complexes. Interacts with LEF1, MEF2A, MYBL1 and MYBL2. Interacts with the upstream activating kinases HIPK2 and MAP3K7/TAK1. Interaction with MAP3K7/TAK1 seems to be indirect, and may be mediated by other proteins such as STAT3, TAB1 and TAB2. Interacts with and phosphorylates a number of transcription factors including FOXO1, FOXO3, FOXO4, MYB, NOTCH1 and TCF7L2/TCF4. Interacts with DAPK3/ZIPK, and this interaction may disrupt interaction with transcription factors such as TCF7L2/TCF4. Forms a transcriptional repressor complex with CHD7, PPARG and SETDB1. Interacts with RNF138/NARF. Interacts with ATF5; the interaction stabilizes ATF5 at the protein level in a kinase-independent manner. The cofactor is Mg(2+). Post-translationally, phosphorylated on Thr-298. Intermolecular autophosphorylation on Thr-298 activates the enzyme.

It localises to the nucleus. It is found in the cytoplasm. It catalyses the reaction L-seryl-[protein] + ATP = O-phospho-L-seryl-[protein] + ADP + H(+). The catalysed reaction is L-threonyl-[protein] + ATP = O-phospho-L-threonyl-[protein] + ADP + H(+). Its activity is regulated as follows. Activated by the non-canonical Wnt signaling pathway, in which WNT5A leads to activation of MAP3K7/TAK1 and HIPK2, which subsequently phosphorylates and activates this protein. Activated by dimerization and subsequent intermolecular autophosphorylation on Thr-298. Other cytokines such as IL6 may also activate this regulatory circuit. In terms of biological role, serine/threonine-protein kinase that regulates a number of transcription factors with key roles in cell fate determination. Positive effector of the non-canonical Wnt signaling pathway, acting downstream of WNT5A, MAP3K7/TAK1 and HIPK2. Negative regulator of the canonical Wnt/beta-catenin signaling pathway. Binds to and phosphorylates TCF7L2/TCF4 and LEF1, promoting the dissociation of the TCF7L2/LEF1/beta-catenin complex from DNA, as well as the ubiquitination and subsequent proteolysis of LEF1. Together these effects inhibit the transcriptional activation of canonical Wnt/beta-catenin target genes. Negative regulator of the Notch signaling pathway. Binds to and phosphorylates NOTCH1, thereby preventing the formation of a transcriptionally active ternary complex of NOTCH1, RBPJ/RBPSUH and MAML1. Negative regulator of the MYB family of transcription factors. Phosphorylation of MYB leads to its subsequent proteolysis while phosphorylation of MYBL1 and MYBL2 inhibits their interaction with the coactivator CREBBP. Other transcription factors may also be inhibited by direct phosphorylation of CREBBP itself. Acts downstream of IL6 and MAP3K7/TAK1 to phosphorylate STAT3, which is in turn required for activation of NLK by MAP3K7/TAK1. Upon IL1B stimulus, cooperates with ATF5 to activate the transactivation activity of C/EBP subfamily members. Phosphorylates ATF5 but also stabilizes ATF5 protein levels in a kinase-independent manner. Acts as an inhibitor of the mTORC1 complex in response to osmotic stress by mediating phosphorylation of RPTOR, thereby preventing recruitment of the mTORC1 complex to lysosomes. The polypeptide is Serine/threonine-protein kinase NLK (NLK) (Canis lupus familiaris (Dog)).